Reading from the N-terminus, the 421-residue chain is Serine--tRNA ligase (421 aa).

Position 227–229 (227–229) interacts with L-serine; it reads TSE. ATP contacts are provided by residues 257 to 259 and valine 273; that span reads RRE. An L-serine-binding site is contributed by glutamate 280. 344–347 contributes to the ATP binding site; the sequence is ELTS. Threonine 379 provides a ligand contact to L-serine.

It belongs to the class-II aminoacyl-tRNA synthetase family. Type-1 seryl-tRNA synthetase subfamily. Homodimer. The tRNA molecule binds across the dimer.

It is found in the cytoplasm. The catalysed reaction is tRNA(Ser) + L-serine + ATP = L-seryl-tRNA(Ser) + AMP + diphosphate + H(+). It catalyses the reaction tRNA(Sec) + L-serine + ATP = L-seryl-tRNA(Sec) + AMP + diphosphate + H(+). Its pathway is aminoacyl-tRNA biosynthesis; selenocysteinyl-tRNA(Sec) biosynthesis; L-seryl-tRNA(Sec) from L-serine and tRNA(Sec): step 1/1. Catalyzes the attachment of serine to tRNA(Ser). Is also able to aminoacylate tRNA(Sec) with serine, to form the misacylated tRNA L-seryl-tRNA(Sec), which will be further converted into selenocysteinyl-tRNA(Sec). This is Serine--tRNA ligase from Leifsonia xyli subsp. xyli (strain CTCB07).